Reading from the N-terminus, the 487-residue chain is Rhoptry apical surface protein 1 (487 aa).

The interval 337 to 487 is disordered; it reads EVAMSGRGGH…EEEQPLLFTQ (151 aa). Composition is skewed to basic and acidic residues over residues 385-399 and 454-475; these read DGIRGRSPRGSDRRA and EKNEEASEADERPRERTEGVEY.

In terms of assembly, interacts with RASP2.

It localises to the cytoplasmic vesicle. Its subcellular location is the secretory vesicle. The protein resides in the rhoptry membrane. This Toxoplasma gondii (strain ATCC 50853 / GT1) protein is Rhoptry apical surface protein 1.